We begin with the raw amino-acid sequence, 849 residues long: A-kinase anchor protein 4 (849 aa).

Positions 1–188 are excised as a propeptide; sequence MIAYCGTTTM…MAASKNTNNN (188 aa). Phosphoserine occurs at positions 96, 130, 190, and 204. A compositionally biased stretch (polar residues) spans 183–205; it reads KNTNNNQSPSNPATKSPSNQRSV. Positions 183-210 are disordered; the sequence is KNTNNNQSPSNPATKSPSNQRSVATPEG. Position 207 is a phosphothreonine (Thr-207). Phosphoserine occurs at positions 213, 226, and 271. The interval 219-232 is PKA-RI and PKA-RII subunit binding domain; it reads FYVNRLSSLVIQMA. Tyr-301 is subject to Phosphotyrosine. A phosphoserine mark is found at Ser-302, Ser-341, Ser-431, Ser-442, Ser-444, Ser-463, Ser-492, Ser-497, and Ser-504. Residues 335–344 form a PKA-RI-alpha subunit binding domain region; that stretch reads YANQVASDMM. A Phosphothreonine modification is found at Thr-506. A Phosphoserine modification is found at Ser-538. Phosphoserine; by STK33 is present on Ser-583. 4 positions are modified to phosphoserine: Ser-628, Ser-633, Ser-652, and Ser-702.

The protein belongs to the AKAP110 family. Interacts with PRKAR1A and PRKAR2A. Interacts with ENO4. Interacts with QRICH2. Phosphorylated by STK33 during sperm flagella assembly. Expressed in the fibrous sheath of spermatozoa (at protein level). Expressed in step 1 to step 6 spermatids, abundance then increases during steps 8 to 12, abundance decreases thereafter.

The protein resides in the cell projection. The protein localises to the cilium. Its subcellular location is the flagellum. Functionally, major structural component of sperm fibrous sheath. Plays a role in sperm motility. This chain is A-kinase anchor protein 4, found in Mus musculus (Mouse).